A 922-amino-acid polypeptide reads, in one-letter code: Alpha-actinin, sarcomeric (922 aa).

The actin-binding stretch occupies residues 1-252; the sequence is MMENGGYVGQ…IMTYVSCYYH (252 aa). 2 Calponin-homology (CH) domains span residues 36–140 and 149–255; these read KQQK…LRFA and MTAK…HAFQ. 4 Spectrin repeats span residues 253–393, 394–508, 509–629, and 630–742; these read AFQG…MVSD, ITNS…RCQR, ICDQ…SADL, and ISRK…TMET. EF-hand domains lie at 776–811 and 817–852; these read EQLTEFRSSFNHFDKNRTGRLAPEEFKSCLVSLGYS and QGDMDFQRILAVVDPNASGYVQFDAFLDFMTRESTD. Residues Asp-789, Asn-791, Thr-793, Arg-795, and Glu-800 each coordinate Ca(2+).

Belongs to the alpha-actinin family. Homodimer; antiparallel.

Its function is as follows. F-actin cross-linking protein which is thought to anchor actin to a variety of intracellular structures. This is a bundling protein. The sequence is that of Alpha-actinin, sarcomeric (Actn) from Anopheles gambiae (African malaria mosquito).